We begin with the raw amino-acid sequence, 694 residues long: Maintenance of telomere capping protein 4 (694 aa).

The span at 1–12 (MTHTNEHDHKAE) shows a compositional bias: basic and acidic residues. Positions 1–26 (MTHTNEHDHKAEQQQNGRGDTTTETV) are disordered. The span at 13–26 (QQQNGRGDTTTETV) shows a compositional bias: polar residues. Serine 85 bears the Phosphoserine mark. The segment covering 211–222 (YSPSNESSGSSS) has biased composition (low complexity). 3 disordered regions span residues 211–287 (YSPS…PEAQ), 325–437 (AKGS…TETY), and 465–511 (KTSN…PVGL). Residues 223–243 (SRRHHGHHIHPRRHLQHHSRV) show a composition bias toward basic residues. The segment covering 244–257 (RTANSVHSNTQSLT) has biased composition (polar residues). Residue threonine 263 is modified to Phosphothreonine. Over residues 276 to 287 (MITKIATTPEAQ) the composition is skewed to polar residues. The span at 403-417 (SNGGTSRRSSNNGES) shows a compositional bias: low complexity. A compositionally biased stretch (polar residues) spans 418–437 (ISTNSSKSSMGITFGNTETY). Basic and acidic residues predominate over residues 471-485 (LRAEGEQALESDKEL). Residues serine 481 and serine 491 each carry the phosphoserine modification. Tyrosine 493 bears the Phosphotyrosine mark. Residues 655–675 (RLLEFGIVLVLWTIWFLFSVL) form a helical membrane-spanning segment.

Its subcellular location is the membrane. The protein resides in the cytoplasm. The polypeptide is Maintenance of telomere capping protein 4 (MTC4) (Saccharomyces cerevisiae (strain ATCC 204508 / S288c) (Baker's yeast)).